A 217-amino-acid chain; its full sequence is Putative thymidylate synthase (217 aa).

Cysteine 139 is an active-site residue.

It belongs to the thymidylate synthase family. Archaeal-type ThyA subfamily. Monomer.

The protein localises to the cytoplasm. It participates in pyrimidine metabolism; dTTP biosynthesis. Its function is as follows. May catalyze the biosynthesis of dTMP using an unknown cosubstrate. This chain is Putative thymidylate synthase, found in Methanosarcina mazei (strain ATCC BAA-159 / DSM 3647 / Goe1 / Go1 / JCM 11833 / OCM 88) (Methanosarcina frisia).